The following is a 583-amino-acid chain: Scarecrow-like protein 30 (583 aa).

2 disordered regions span residues 107–154 and 182–205; these read GDLE…RKSK and EATE…KSDQ. Residues 115-124 show a composition bias toward polar residues; the sequence is GNFSSITSLH. Residues 131 to 140 show a composition bias toward basic and acidic residues; the sequence is ESTRRYRHRD. The region spanning 200 to 579 is the GRAS domain; that stretch reads QQKSDQPVDM…RVLYAVSCWK (380 aa). The tract at residues 207 to 266 is leucine repeat I (LRI); it reads VDMRNLLMQCAQAVASFDQRRAFEKLKEIREHSSRHGDATQRLGYHFAEALEARITGTMT. The tract at residues 285-350 is VHIID; the sequence is YKGFVQACPT…IGPPLLRVTG (66 aa). Residues 316–320 carry the VHIID motif; the sequence is LHIID. The interval 366 to 398 is leucine repeat II (LRII); the sequence is ETGRRLKRFCDKFNVPFEYSFIAKNWENITLDD. Residues 407 to 501 form a PFYRE region; sequence TVVNCILRLQ…RELIIRDAMS (95 aa). Residues 504 to 579 are SAW; the sequence is ACEGSERFAR…RVLYAVSCWK (76 aa).

Belongs to the GRAS family. As to quaternary structure, interacts with SNRNP35 and CYP95. In terms of tissue distribution, expressed in seedlings, leaves, sepals, stamen and pistil, and in the quiescent center of root meristem.

It localises to the nucleus. Its function is as follows. Probable transcription factor involved in plant development. In Arabidopsis thaliana (Mouse-ear cress), this protein is Scarecrow-like protein 30 (SCL30).